A 348-amino-acid polypeptide reads, in one-letter code: E3 ubiquitin-protein ligase MARCHF9 (348 aa).

The disordered stretch occupies residues 48–96 (ARDGDGDEEEYYGSEPRARGLAGDKEPRAGPPPPPAPPPPPPGALDALS). Residues 63–75 (PRARGLAGDKEPR) show a composition bias toward basic and acidic residues. Residues 76–90 (AGPPPPPAPPPPPPG) show a composition bias toward pro residues. The RING-CH-type zinc finger occupies 102–162 (DSGLRTPQCR…ELCYFKYQVL (61 aa)). Residues cysteine 110, cysteine 113, cysteine 126, cysteine 128, histidine 136, cysteine 139, cysteine 152, and cysteine 155 each coordinate Zn(2+). 2 consecutive transmembrane segments (helical) span residues 185–205 (IAAIVLGSLFLVASISWLIWS) and 219–239 (LFQICYGMYGFMDVVCIGLIV). Disordered regions lie at residues 272-304 (GDTGGGAAGKPGPRTSRTSPPAGAPTRPPAAQR) and 328-348 (PPDARSSSHSGREVVMRVTTV).

As to quaternary structure, homodimer.

It localises to the golgi apparatus membrane. The protein localises to the lysosome membrane. The enzyme catalyses S-ubiquitinyl-[E2 ubiquitin-conjugating enzyme]-L-cysteine + [acceptor protein]-L-lysine = [E2 ubiquitin-conjugating enzyme]-L-cysteine + N(6)-ubiquitinyl-[acceptor protein]-L-lysine.. It functions in the pathway protein modification; protein ubiquitination. In terms of biological role, E3 ubiquitin-protein ligase that may mediate ubiquitination of MHC-I, CD4 and ICAM1, and promote their subsequent endocytosis and sorting to lysosomes via multivesicular bodies. E3 ubiquitin ligases accept ubiquitin from an E2 ubiquitin-conjugating enzyme in the form of a thioester and then directly transfer the ubiquitin to targeted substrates. This is E3 ubiquitin-protein ligase MARCHF9 (Marchf9) from Mus musculus (Mouse).